The following is a 140-amino-acid chain: Phosphoribosyl-AMP cyclohydrolase (140 aa).

A Mg(2+)-binding site is contributed by Asp-78. Cys-79 contacts Zn(2+). The Mg(2+) site is built by Asp-80 and Asp-82. Cys-96 and Cys-103 together coordinate Zn(2+).

Belongs to the PRA-CH family. Homodimer. Mg(2+) serves as cofactor. It depends on Zn(2+) as a cofactor.

It localises to the cytoplasm. The enzyme catalyses 1-(5-phospho-beta-D-ribosyl)-5'-AMP + H2O = 1-(5-phospho-beta-D-ribosyl)-5-[(5-phospho-beta-D-ribosylamino)methylideneamino]imidazole-4-carboxamide. Its pathway is amino-acid biosynthesis; L-histidine biosynthesis; L-histidine from 5-phospho-alpha-D-ribose 1-diphosphate: step 3/9. Its function is as follows. Catalyzes the hydrolysis of the adenine ring of phosphoribosyl-AMP. The sequence is that of Phosphoribosyl-AMP cyclohydrolase from Ralstonia pickettii (strain 12J).